The following is a 387-amino-acid chain: Protein RecA (387 aa).

Residue 80-87 (GPESSGKT) coordinates ATP. A disordered region spans residues 348–387 (LDDSEVAETEEETTASKTKAKAKKEEKAVETEEIELELED). Acidic residues-rich tracts occupy residues 349–360 (DDSEVAETEEET) and 378–387 (TEEIELELED).

It belongs to the RecA family.

Its subcellular location is the cytoplasm. Its function is as follows. Can catalyze the hydrolysis of ATP in the presence of single-stranded DNA, the ATP-dependent uptake of single-stranded DNA by duplex DNA, and the ATP-dependent hybridization of homologous single-stranded DNAs. It interacts with LexA causing its activation and leading to its autocatalytic cleavage. The sequence is that of Protein RecA from Lactococcus lactis subsp. cremoris (strain MG1363).